The chain runs to 151 residues: uncharacterized protein (151 aa).

Helical transmembrane passes span isoleucine 22–phenylalanine 42, alanine 62–isoleucine 82, leucine 97–phenylalanine 117, and isoleucine 121–alanine 141.

It localises to the cell membrane. This is an uncharacterized protein from Bacillus subtilis (strain 168).